The following is a 298-amino-acid chain: Glycine--tRNA ligase alpha subunit (298 aa).

It belongs to the class-II aminoacyl-tRNA synthetase family. In terms of assembly, tetramer of two alpha and two beta subunits.

It localises to the cytoplasm. It carries out the reaction tRNA(Gly) + glycine + ATP = glycyl-tRNA(Gly) + AMP + diphosphate. This Helicobacter acinonychis (strain Sheeba) protein is Glycine--tRNA ligase alpha subunit.